We begin with the raw amino-acid sequence, 228 residues long: Putative adhesin A1I_01215 (228 aa).

Residues 1–22 (MKKLLLIAATSATVLSSALSFA) form the signal peptide.

This is Putative adhesin A1I_01215 from Rickettsia bellii (strain OSU 85-389).